The following is a 208-amino-acid chain: V-type ATP synthase subunit D (208 aa).

It belongs to the V-ATPase D subunit family.

Produces ATP from ADP in the presence of a proton gradient across the membrane. The polypeptide is V-type ATP synthase subunit D (Chlamydia abortus (strain DSM 27085 / S26/3) (Chlamydophila abortus)).